Reading from the N-terminus, the 238-residue chain is Ribonuclease PH (238 aa).

Phosphate contacts are provided by residues R86 and 124–126 (GTR).

The protein belongs to the RNase PH family. In terms of assembly, homohexameric ring arranged as a trimer of dimers.

It carries out the reaction tRNA(n+1) + phosphate = tRNA(n) + a ribonucleoside 5'-diphosphate. Phosphorolytic 3'-5' exoribonuclease that plays an important role in tRNA 3'-end maturation. Removes nucleotide residues following the 3'-CCA terminus of tRNAs; can also add nucleotides to the ends of RNA molecules by using nucleoside diphosphates as substrates, but this may not be physiologically important. Probably plays a role in initiation of 16S rRNA degradation (leading to ribosome degradation) during starvation. The chain is Ribonuclease PH from Aliivibrio fischeri (strain ATCC 700601 / ES114) (Vibrio fischeri).